The primary structure comprises 118 residues: Flowering-promoting factor 1-like protein 4 (118 aa).

The protein belongs to the FPF1 family.

This is Flowering-promoting factor 1-like protein 4 from Oryza sativa subsp. japonica (Rice).